Reading from the N-terminus, the 419-residue chain is MINRFSIEKVKGLEIIDSRGNPTIRVFVRTNDGVESFGDAPAGASKGTREAIEVRDENGLTVKRAVDIANYIIDPALHGIDVREQGIIDKILIDIDSTENKSKLGGNTIIATSIAALKTASKALGLEVFKYIAGPRLPKIPIPLLNIINGGLHAGNKLKIQEFIVLPIKFNTFKEAFFAAIEVYRNLKGLISERYGKIYTAVGDEGGFSPPLEETREALDLIYTSINNAGYQGKIYMGMDAAASDFYDPKKEKYIIDGKELNPNQLLEFYLDLAKEYPIVYLEDPFEENSFDMFGELQNKLNSTIVTGDDLYTTNIKYLKIGIEKRSTKGVIVKPNQVGTISETFEFTNLARRNSIKLVTSHRSGETEDNFIAEFAVGIESDFIKTGAPARGERTSKYNKLLEIENKFGLEYGGKYFYL.

Q161 is a (2R)-2-phosphoglycerate binding site. The active-site Proton donor is the E205. Positions 240, 283, and 309 each coordinate Mg(2+). (2R)-2-phosphoglycerate is bound by residues K334, R363, S364, and K385. K334 functions as the Proton acceptor in the catalytic mechanism.

It belongs to the enolase family. Mg(2+) is required as a cofactor.

Its subcellular location is the cytoplasm. The protein localises to the secreted. It localises to the cell surface. The catalysed reaction is (2R)-2-phosphoglycerate = phosphoenolpyruvate + H2O. It functions in the pathway carbohydrate degradation; glycolysis; pyruvate from D-glyceraldehyde 3-phosphate: step 4/5. In terms of biological role, catalyzes the reversible conversion of 2-phosphoglycerate (2-PG) into phosphoenolpyruvate (PEP). It is essential for the degradation of carbohydrates via glycolysis. The chain is Enolase from Saccharolobus islandicus (strain M.16.27) (Sulfolobus islandicus).